Reading from the N-terminus, the 41-residue chain is SPbeta prophage-derived uncharacterized protein YosF (41 aa).

This Bacillus subtilis (strain 168) protein is SPbeta prophage-derived uncharacterized protein YosF (yosF).